The primary structure comprises 232 residues: Enolase-phosphatase E1 (232 aa).

Belongs to the HAD-like hydrolase superfamily. MasA/MtnC family. As to quaternary structure, monomer. It depends on Mg(2+) as a cofactor.

It catalyses the reaction 5-methylsulfanyl-2,3-dioxopentyl phosphate + H2O = 1,2-dihydroxy-5-(methylsulfanyl)pent-1-en-3-one + phosphate. Its pathway is amino-acid biosynthesis; L-methionine biosynthesis via salvage pathway; L-methionine from S-methyl-5-thio-alpha-D-ribose 1-phosphate: step 3/6. It participates in amino-acid biosynthesis; L-methionine biosynthesis via salvage pathway; L-methionine from S-methyl-5-thio-alpha-D-ribose 1-phosphate: step 4/6. Its function is as follows. Bifunctional enzyme that catalyzes the enolization of 2,3-diketo-5-methylthiopentyl-1-phosphate (DK-MTP-1-P) into the intermediate 2-hydroxy-3-keto-5-methylthiopentenyl-1-phosphate (HK-MTPenyl-1-P), which is then dephosphorylated to form the acireductone 1,2-dihydroxy-3-keto-5-methylthiopentene (DHK-MTPene). This chain is Enolase-phosphatase E1, found in Xanthomonas axonopodis pv. citri (strain 306).